A 98-amino-acid polypeptide reads, in one-letter code: NADH-ubiquinone oxidoreductase chain 4L (98 aa).

The next 3 membrane-spanning stretches (helical) occupy residues 1–21 (MTMVYANIFLAFITSLMGLLM), 29–49 (SLLCLEGMMLSLFVMMTVTIL), and 61–81 (IVLLVFAACEAALGLSLLVMV).

It belongs to the complex I subunit 4L family. As to quaternary structure, core subunit of respiratory chain NADH dehydrogenase (Complex I) which is composed of 45 different subunits.

It is found in the mitochondrion inner membrane. The catalysed reaction is a ubiquinone + NADH + 5 H(+)(in) = a ubiquinol + NAD(+) + 4 H(+)(out). In terms of biological role, core subunit of the mitochondrial membrane respiratory chain NADH dehydrogenase (Complex I) which catalyzes electron transfer from NADH through the respiratory chain, using ubiquinone as an electron acceptor. Part of the enzyme membrane arm which is embedded in the lipid bilayer and involved in proton translocation. The sequence is that of NADH-ubiquinone oxidoreductase chain 4L (MT-ND4L) from Monachus monachus (Mediterranean monk seal).